We begin with the raw amino-acid sequence, 173 residues long: Putative metal-dependent hydrolase BA_2700/GBAA_2700/BAS2515 (173 aa).

Residues His-65, His-156, and His-160 each contribute to the Zn(2+) site.

It belongs to the metal hydrolase YfiT family. As to quaternary structure, homodimer. Zn(2+) is required as a cofactor.

It is found in the cytoplasm. Its function is as follows. Possible metal-dependent hydrolase. This Bacillus anthracis protein is Putative metal-dependent hydrolase BA_2700/GBAA_2700/BAS2515.